We begin with the raw amino-acid sequence, 290 residues long: 4-hydroxy-tetrahydrodipicolinate synthase (290 aa).

Ser-44 lines the pyruvate pocket. The active-site Proton donor/acceptor is Tyr-132. The Schiff-base intermediate with substrate role is filled by Lys-161. Val-202 contributes to the pyruvate binding site.

It belongs to the DapA family. In terms of assembly, homotetramer; dimer of dimers.

The protein localises to the cytoplasm. The catalysed reaction is L-aspartate 4-semialdehyde + pyruvate = (2S,4S)-4-hydroxy-2,3,4,5-tetrahydrodipicolinate + H2O + H(+). It participates in amino-acid biosynthesis; L-lysine biosynthesis via DAP pathway; (S)-tetrahydrodipicolinate from L-aspartate: step 3/4. Catalyzes the condensation of (S)-aspartate-beta-semialdehyde [(S)-ASA] and pyruvate to 4-hydroxy-tetrahydrodipicolinate (HTPA). The sequence is that of 4-hydroxy-tetrahydrodipicolinate synthase from Hydrogenobaculum sp. (strain Y04AAS1).